Consider the following 118-residue polypeptide: NADH-quinone oxidoreductase subunit A 2 (118 aa).

A run of 3 helical transmembrane segments spans residues Tyr5–Phe25, Phe60–Trp80, and Leu87–Ile107.

The protein belongs to the complex I subunit 3 family. In terms of assembly, NDH-1 is composed of 14 different subunits. Subunits NuoA, H, J, K, L, M, N constitute the membrane sector of the complex.

The protein localises to the cell inner membrane. The catalysed reaction is a quinone + NADH + 5 H(+)(in) = a quinol + NAD(+) + 4 H(+)(out). In terms of biological role, NDH-1 shuttles electrons from NADH, via FMN and iron-sulfur (Fe-S) centers, to quinones in the respiratory chain. The immediate electron acceptor for the enzyme in this species is believed to be ubiquinone. Couples the redox reaction to proton translocation (for every two electrons transferred, four hydrogen ions are translocated across the cytoplasmic membrane), and thus conserves the redox energy in a proton gradient. This Geobacter metallireducens (strain ATCC 53774 / DSM 7210 / GS-15) protein is NADH-quinone oxidoreductase subunit A 2.